Consider the following 382-residue polypeptide: Protein RecA (382 aa).

Residue 79–86 participates in ATP binding; the sequence is GPESSGKT. The tract at residues 362–382 is disordered; that stretch reads ATKSAAKGSEVQADVKTKGAA.

This sequence belongs to the RecA family.

The protein resides in the cytoplasm. Can catalyze the hydrolysis of ATP in the presence of single-stranded DNA, the ATP-dependent uptake of single-stranded DNA by duplex DNA, and the ATP-dependent hybridization of homologous single-stranded DNAs. It interacts with LexA causing its activation and leading to its autocatalytic cleavage. The sequence is that of Protein RecA from Synechococcus sp. (strain WH7803).